Here is a 554-residue protein sequence, read N- to C-terminus: Dihydroxy-acid dehydratase (554 aa).

A Mg(2+)-binding site is contributed by D78. [2Fe-2S] cluster is bound at residue C119. The Mg(2+) site is built by D120 and K121. Residue K121 is modified to N6-carboxylysine. [2Fe-2S] cluster is bound at residue C191. E442 provides a ligand contact to Mg(2+). The Proton acceptor role is filled by S468.

It belongs to the IlvD/Edd family. As to quaternary structure, homodimer. [2Fe-2S] cluster is required as a cofactor. Requires Mg(2+) as cofactor.

It catalyses the reaction (2R)-2,3-dihydroxy-3-methylbutanoate = 3-methyl-2-oxobutanoate + H2O. The enzyme catalyses (2R,3R)-2,3-dihydroxy-3-methylpentanoate = (S)-3-methyl-2-oxopentanoate + H2O. Its pathway is amino-acid biosynthesis; L-isoleucine biosynthesis; L-isoleucine from 2-oxobutanoate: step 3/4. The protein operates within amino-acid biosynthesis; L-valine biosynthesis; L-valine from pyruvate: step 3/4. Functionally, functions in the biosynthesis of branched-chain amino acids. Catalyzes the dehydration of (2R,3R)-2,3-dihydroxy-3-methylpentanoate (2,3-dihydroxy-3-methylvalerate) into 2-oxo-3-methylpentanoate (2-oxo-3-methylvalerate) and of (2R)-2,3-dihydroxy-3-methylbutanoate (2,3-dihydroxyisovalerate) into 2-oxo-3-methylbutanoate (2-oxoisovalerate), the penultimate precursor to L-isoleucine and L-valine, respectively. The protein is Dihydroxy-acid dehydratase of Thermotoga sp. (strain RQ2).